Consider the following 442-residue polypeptide: Vitellogenin-2 (442 aa).

A signal peptide spans 1-19 (MNPLRTLCVMACLLAVAMG). Low complexity predominate over residues 21–33 (PQSGNRSGRRSNS). The disordered stretch occupies residues 21-44 (PQSGNRSGRRSNSLDNVEQPSNWV). Residues Ser31 and Ser33 each carry the phosphoserine modification. A compositionally biased stretch (polar residues) spans 34–44 (LDNVEQPSNWV). Ser82 carries the phosphoserine modification. Disordered regions lie at residues 165 to 200 (QPYE…QDDT) and 408 to 442 (KSPF…SRRQ). At Thr170 the chain carries Phosphothreonine. The residue at position 172 (Tyr172) is a Sulfotyrosine. Phosphoserine occurs at positions 173, 178, 181, 182, and 183. Low complexity-rich tracts occupy residues 175 to 186 (EEQSQRSSSEEQ) and 431 to 442 (RQSSSNQGSRRQ).

Belongs to the AB hydrolase superfamily. Lipase family. Post-translationally, tyrosine sulfation occurs in the female only and plays an essential functional role. Synthesized in the fat body and ovarian follicle cells and accumulate in the oocyte.

The protein resides in the secreted. Vitellogenin is the major yolk protein of eggs where it is used as a food source during embryogenesis. Vitellogenins and their receptor yl/yolkless are required for maintenance of microtubule plus-end orientation towards the posterior pole of oocytes. Involved in polarized localization of germ plasm components, such as osk mRNA and vas protein, to the oocyte posterior cortex. Receptor-mediated endocytosis by yl/yolkless is crucial for actin reorganization, mediated by osk isoform A/Long, required to anchor germ plasm components to the oocyte cortex. In Drosophila melanogaster (Fruit fly), this protein is Vitellogenin-2 (Yp2).